We begin with the raw amino-acid sequence, 231 residues long: 5'-methylthioadenosine/S-adenosylhomocysteine nucleosidase (231 aa).

The active-site Proton acceptor is E12. Substrate-binding positions include G78, M153, and 174-175 (ME). D198 serves as the catalytic Proton donor.

Belongs to the PNP/UDP phosphorylase family. MtnN subfamily.

It catalyses the reaction S-adenosyl-L-homocysteine + H2O = S-(5-deoxy-D-ribos-5-yl)-L-homocysteine + adenine. It carries out the reaction S-methyl-5'-thioadenosine + H2O = 5-(methylsulfanyl)-D-ribose + adenine. The enzyme catalyses 5'-deoxyadenosine + H2O = 5-deoxy-D-ribose + adenine. The protein operates within amino-acid biosynthesis; L-methionine biosynthesis via salvage pathway; S-methyl-5-thio-alpha-D-ribose 1-phosphate from S-methyl-5'-thioadenosine (hydrolase route): step 1/2. In terms of biological role, catalyzes the irreversible cleavage of the glycosidic bond in both 5'-methylthioadenosine (MTA) and S-adenosylhomocysteine (SAH/AdoHcy) to adenine and the corresponding thioribose, 5'-methylthioribose and S-ribosylhomocysteine, respectively. Also cleaves 5'-deoxyadenosine, a toxic by-product of radical S-adenosylmethionine (SAM) enzymes, into 5-deoxyribose and adenine. The chain is 5'-methylthioadenosine/S-adenosylhomocysteine nucleosidase from Bacillus cytotoxicus (strain DSM 22905 / CIP 110041 / 391-98 / NVH 391-98).